A 728-amino-acid chain; its full sequence is Probable subtilase-type serine protease DR_A0283 (728 aa).

Residues M1–A22 form the signal peptide. A propeptide spanning residues A23–Q148 is cleaved from the precursor. The Peptidase S8 domain occupies Q159–A471. Residues D188, H242, and S412 each act as charge relay system in the active site.

This sequence belongs to the peptidase S8 family.

It localises to the secreted. This is Probable subtilase-type serine protease DR_A0283 from Deinococcus radiodurans (strain ATCC 13939 / DSM 20539 / JCM 16871 / CCUG 27074 / LMG 4051 / NBRC 15346 / NCIMB 9279 / VKM B-1422 / R1).